The following is a 408-amino-acid chain: (R)-2-hydroxyisocaproyl-CoA dehydratase alpha subunit (408 aa).

Glutamate 55 is a substrate binding site. 3 residues coordinate [4Fe-4S] cluster: cysteine 84, cysteine 117, and cysteine 346.

This sequence belongs to the FldB/FldC dehydratase alpha/beta subunit family. Part of the heterodimeric complex HadBC composed of (R)-2-hydroxyisocaproyl-CoA dehydratase alpha (HadB) and beta (HadC) subunit. Requires [4Fe-4S] cluster as cofactor.

It carries out the reaction (R)-2-hydroxy-4-methylpentanoyl-CoA = 4-methylpent-2-enoyl-CoA + H2O. Its activity is regulated as follows. Activated by HadI. Involved in the reductive branch of L-leucine fermentation. Catalyzes the irreversible beta/alpha-elimination of water from (R)-2-hydroxyisocaproyl-CoA to yield isocaprenoyl-CoA. This beta/alpha-dehydration depends on the reductive formation of ketyl radicals on the substrate generated by injection of a single electron from the ATP-dependent activator protein HadI. The enzyme is specific for the R-isomer. In Clostridioides difficile (Peptoclostridium difficile), this protein is (R)-2-hydroxyisocaproyl-CoA dehydratase alpha subunit.